The sequence spans 352 residues: MNGTEGPNFYVPMSNVTGVVRSPFEYPQYYLAEPWAYSALAAYMFFLIIAGFPINFLTLYVTIEHKKLRTPLNYILLNLAVADLFMVFGGFTTTMYTSMHGYFVFGPTGCNIEGFFATLGGEIALWCLVVLAVERWMVVCKPMSNFRFGENHAIMGVAFTWVMALACAAPPLFGWSRYIPEGMQCSCGMDHYAPNPETYNESFVIYMFICHFTIPLTVISFCYGRLVCTVKEATAQQQESETTQRAEREVTRMVIIMVISFLVCWVPYASVAWYIFTHQGSSFGPIFMTIPAFFAKSSSLYNPLIYICMNKQSRNCMITTLCCGKNPFEEEEGASTTASKTEASSVSSVSPA.

The Extracellular segment spans residues 1–36 (MNGTEGPNFYVPMSNVTGVVRSPFEYPQYYLAEPWA). Asn2 and Asn15 each carry an N-linked (GlcNAc...) asparagine glycan. Residues 37 to 61 (YSALAAYMFFLIIAGFPINFLTLYV) form a helical membrane-spanning segment. The Cytoplasmic portion of the chain corresponds to 62–73 (TIEHKKLRTPLN). A helical membrane pass occupies residues 74 to 98 (YILLNLAVADLFMVFGGFTTTMYTS). Topologically, residues 99–113 (MHGYFVFGPTGCNIE) are extracellular. A disulfide bond links Cys110 and Cys187. The chain crosses the membrane as a helical span at residues 114 to 133 (GFFATLGGEIALWCLVVLAV). Residues 134–152 (ERWMVVCKPMSNFRFGENH) are Cytoplasmic-facing. A helical transmembrane segment spans residues 153-176 (AIMGVAFTWVMALACAAPPLFGWS). Over 177–202 (RYIPEGMQCSCGMDHYAPNPETYNES) the chain is Extracellular. Asn200 carries N-linked (GlcNAc...) asparagine glycosylation. A helical membrane pass occupies residues 203–230 (FVIYMFICHFTIPLTVISFCYGRLVCTV). Over 231-252 (KEATAQQQESETTQRAEREVTR) the chain is Cytoplasmic. A helical membrane pass occupies residues 253–276 (MVIIMVISFLVCWVPYASVAWYIF). Residues 277–284 (THQGSSFG) lie on the Extracellular side of the membrane. Residues 285–309 (PIFMTIPAFFAKSSSLYNPLIYICM) traverse the membrane as a helical segment. Lys296 carries the post-translational modification N6-(retinylidene)lysine. Residues 310-352 (NKQSRNCMITTLCCGKNPFEEEEGASTTASKTEASSVSSVSPA) lie on the Cytoplasmic side of the membrane. A lipid anchor (S-palmitoyl cysteine) is attached at Cys323. Residues 330-352 (EEEGASTTASKTEASSVSSVSPA) are disordered. The span at 334–352 (ASTTASKTEASSVSSVSPA) shows a compositional bias: low complexity.

The protein belongs to the G-protein coupled receptor 1 family. Opsin subfamily. In terms of processing, phosphorylated on some or all of the serine and threonine residues present in the C-terminal region. In terms of tissue distribution, rod shaped photoreceptor cells which mediates vision in dim light.

It is found in the membrane. Functionally, visual pigments such as rhodopsin and porphyropsin are light-absorbing molecules that mediate vision. Rhodopsin consists of an apoprotein, opsin, covalently linked to 11-cis-retinal. This receptor is coupled to the activation of phospholipase C. Porphyropsin consists of opsin covalently linked to 11-cis 3,4-didehydroretinal. The chain is Rhodopsin, freshwater form from Anguilla anguilla (European freshwater eel).